Reading from the N-terminus, the 655-residue chain is D-xylonate dehydratase YagF (655 aa).

Belongs to the IlvD/Edd family.

It catalyses the reaction D-xylonate = 2-dehydro-3-deoxy-D-arabinonate + H2O. Catalyzes the dehydration of D-xylonic acid to form 2-dehydro-3-deoxy-D-pentonate. This Escherichia coli (strain K12) protein is D-xylonate dehydratase YagF (yagF).